A 799-amino-acid polypeptide reads, in one-letter code: Elongation factor G, mitochondrial (799 aa).

Residues 1–34 constitute a mitochondrion transit peptide; that stretch reads MRCPSLTRLPYRAVSGLPRSVVRLQSQNFLTRRC. The tr-type G domain occupies 97–384; sequence SRVRNIGIAA…GVVDYLPNPA (288 aa). GTP-binding positions include 106–113, 182–186, and 236–239; these read AHIDSGKT, DTPGH, and NKMD.

This sequence belongs to the TRAFAC class translation factor GTPase superfamily. Classic translation factor GTPase family. EF-G/EF-2 subfamily.

The protein localises to the mitochondrion. It participates in protein biosynthesis; polypeptide chain elongation. Its function is as follows. Mitochondrial GTPase that catalyzes the GTP-dependent ribosomal translocation step during translation elongation. During this step, the ribosome changes from the pre-translocational (PRE) to the post-translocational (POST) state as the newly formed A-site-bound peptidyl-tRNA and P-site-bound deacylated tRNA move to the P and E sites, respectively. Catalyzes the coordinated movement of the two tRNA molecules, the mRNA and conformational changes in the ribosome. This chain is Elongation factor G, mitochondrial (mef1), found in Aspergillus flavus (strain ATCC 200026 / FGSC A1120 / IAM 13836 / NRRL 3357 / JCM 12722 / SRRC 167).